Here is an 82-residue protein sequence, read N- to C-terminus: uncharacterized protein (82 aa).

This is an uncharacterized protein from Pigeon circovirus (PiCV).